The chain runs to 184 residues: UPF0397 protein SA2477 (184 aa).

The next 5 helical transmembrane spans lie at 11–31, 44–64, 77–97, 111–131, and 148–168; these read VVAI…VVIP, AFLA…TGLV, AWWS…WIGL, MIYF…LIAP, and QGVI…TILL.

Belongs to the UPF0397 family.

Its subcellular location is the cell membrane. In Staphylococcus aureus (strain N315), this protein is UPF0397 protein SA2477.